The following is a 443-amino-acid chain: MRITDTAGFHAWFAERGAAHRYRITRTPLHDLEGWYTDPASGDVRHRSGRFFSIEGLRYGRQEPDGPAWTQPIIRQPETGVLGVLIKWFDGVPHLLMQAKMEPGNINTLQVSPTVQATFSNYTRVHHGSPVRYIDHFLTPGAGDRVHYDALQSEQGSWFLGKRNRNIVVETTGEIPVHEDFCWVPRPVMAELLRVDNLVNMDSRTVLAGLPDDPGEGSVPRRAVEKPLHDTAALLHWFTGAKVRHRPERTTIPLSRVGGWRRDDDRGEIVHETGRYFRIIGVDVEADSREVTSWSQPMLAPVGRGVVAFVSKEIHGERHLLVQARAEAGTFDAVELGPTVQCNPGNLPDGAPRPPYLDTVLTARPEQVLFDTVHSEEGGRFYHAENRYLVLDGDDVPVDVPEDYTWMTVRQLTRAGRIGNLVDVEARTLLACVRTLPDHGASR.

DTDP-4-dehydro-6-deoxy-alpha-D-glucose-binding positions include Trp35, 118 to 122 (TFSNY), Ser157, Trp260, Arg325, 341 to 343 (QCN), 346 to 347 (NL), and 377 to 380 (EGGR).

The protein belongs to the hexose 2,3-dehydratase family. In terms of assembly, homodimer.

It catalyses the reaction dTDP-4-dehydro-6-deoxy-alpha-D-glucose = dTDP-3,4-didehydro-2,6-dideoxy-alpha-D-glucose + H2O. It functions in the pathway antibiotic biosynthesis; granaticin biosynthesis. Its function is as follows. Involved in the biosynthesis of the 2,6-deoxysugar, dTDP-L-rhodinose, attached to the benzoisochromane quinone chromophore to produce the aglycone antibiotics granaticin and granaticin B. Catalyzes the removal of the hydroxyl group at position C-2 of the hexose ring of dTDP-4-dehydro-6-deoxy-alpha-D-glucopyranose, and the oxidation of the hydroxyl group at position C-3 to form a carbonyl functionality. The product of the reaction, dTDP-2,6-dideoxy-D-glycero-hex-2-enos-4-ulose, is a highly unstable diketosugar, which spontaneously forms dTDP-3,4-didehydro-2,6-dideoxy-alpha-D-glucose. The polypeptide is dTDP-4-dehydro-6-deoxy-alpha-D-glucopyranose 2,3-dehydratase (Streptomyces violaceoruber).